Consider the following 698-residue polypeptide: Elongation factor G (698 aa).

Residues 10–285 (AGTRNIGIMA…AVVDFLPNPL (276 aa)) enclose the tr-type G domain. GTP is bound by residues 19–26 (AHIDAGKT), 83–87 (DTPGH), and 137–140 (NKMD).

The protein belongs to the TRAFAC class translation factor GTPase superfamily. Classic translation factor GTPase family. EF-G/EF-2 subfamily.

It is found in the cytoplasm. Catalyzes the GTP-dependent ribosomal translocation step during translation elongation. During this step, the ribosome changes from the pre-translocational (PRE) to the post-translocational (POST) state as the newly formed A-site-bound peptidyl-tRNA and P-site-bound deacylated tRNA move to the P and E sites, respectively. Catalyzes the coordinated movement of the two tRNA molecules, the mRNA and conformational changes in the ribosome. This Frankia casuarinae (strain DSM 45818 / CECT 9043 / HFP020203 / CcI3) protein is Elongation factor G.